The primary structure comprises 1340 residues: Protein SHORT ROOT IN SALT MEDIUM 1 (1340 aa).

Disordered regions lie at residues 1 to 73 (MHRD…RSHL), 161 to 185 (YGEQ…ADPS), 357 to 473 (EEER…IRRS), 723 to 750 (TVEV…KKTV), 784 to 990 (PETT…PPRA), and 1063 to 1269 (RNQR…KREE). The segment covering 7 to 39 (SSRGTGYGQQQYGSQSGYSQNLGSGYPGSSVSG) has biased composition (low complexity). Residues 46-60 (QISLSSRHPSITGAP) show a composition bias toward polar residues. Composition is skewed to basic and acidic residues over residues 173-182 (LQNEPTRRYA), 357-470 (EEER…EASI), and 723-735 (TVEV…KKSP). Residues 355-426 (LREEERRRED…RERKRALEIK (72 aa)) adopt a coiled-coil conformation. The segment covering 810–824 (GDTSDPSAKANEQTP) has biased composition (polar residues). Residues 828 to 840 (IVKKKIIKRVAKR) show a composition bias toward basic residues. Composition is skewed to basic and acidic residues over residues 841 to 872 (KVAE…KKSS), 887 to 988 (EDVK…EEPP), 1069 to 1097 (HQEE…DKEA), and 1105 to 1138 (PGKD…ETLG). The stretch at 1052 to 1086 (LKKLRVKIVRQRNQRKRHQEELSVKQNEAKSQDKR) forms a coiled coil. Residues 1153 to 1204 (ENQDEEDDDGDDDPEEDPEEDPEEDPEEDPEEDPEECEEMDVANTEQEEPAE) are compositionally biased toward acidic residues. Composition is skewed to basic and acidic residues over residues 1205-1214 (EPQKKEENLE) and 1229-1257 (TDNR…HGKQ). The EF-hand domain occupies 1270–1305 (TVDKELLQAFRFFDRNQAGYVRVEDMRVTIHSLGKF).

As to quaternary structure, interacts with BHLH148/RITF1. In terms of tissue distribution, expressed ubiquitously at high levels, including in guard cells.

Its subcellular location is the nucleus. Its function is as follows. Required for salt tolerance and sodium (Na) homeostasis after salt stress. Together with BHLH148/RITF1, regulates the transcription of several genes involved in the detoxification of reactive oxygen species (ROS) generated by salt (NaCl) stress. Binds calcium. The sequence is that of Protein SHORT ROOT IN SALT MEDIUM 1 from Arabidopsis thaliana (Mouse-ear cress).